We begin with the raw amino-acid sequence, 84 residues long: Large ribosomal subunit protein bL27 (84 aa).

The disordered stretch occupies residues 1 to 22 (MAHKKGGGSTKNGRDSNPKYLG).

The protein belongs to the bacterial ribosomal protein bL27 family.

The sequence is that of Large ribosomal subunit protein bL27 from Prosthecochloris aestuarii (strain DSM 271 / SK 413).